The chain runs to 392 residues: Stilbene synthase 1 (392 aa).

55 to 58 (KFNR) is a binding site for substrate. Residue Cys-164 is part of the active site. Substrate contacts are provided by residues Leu-267 and 305 to 307 (GGP).

This sequence belongs to the thiolase-like superfamily. Chalcone/stilbene synthases family. In terms of assembly, homodimer. As to expression, in leaves, expressed in palisade and spongy parenchyma cells and, to a lesser extent, in epidermal cells after induction.

Its subcellular location is the cytoplasm. The catalysed reaction is 4-coumaroyl-CoA + 3 malonyl-CoA + 3 H(+) = trans-resveratrol + 4 CO2 + 4 CoA. Its pathway is phytoalexin biosynthesis; 3,4',5-trihydroxystilbene biosynthesis; 3,4',5-trihydroxystilbene from trans-4-coumarate: step 2/2. Its function is as follows. Mediates resistance to pathogens which are sensitive to stilbenes such as Botrytis cinerea, Eutypa lata and Plasmopora viticola by enhancing the production of phytoalexins. Confers resistance to Phytophthora palmivora when expressed in papaya. This Vitis vinifera (Grape) protein is Stilbene synthase 1 (VINST1).